The chain runs to 309 residues: tRNA dimethylallyltransferase (309 aa).

Position 14 to 21 (14 to 21 (GPTASGKS)) interacts with ATP. Substrate is bound at residue 16 to 21 (TASGKS). An interaction with substrate tRNA region spans residues 39–42 (DSMQ).

Belongs to the IPP transferase family. In terms of assembly, monomer. Mg(2+) serves as cofactor.

The catalysed reaction is adenosine(37) in tRNA + dimethylallyl diphosphate = N(6)-dimethylallyladenosine(37) in tRNA + diphosphate. In terms of biological role, catalyzes the transfer of a dimethylallyl group onto the adenine at position 37 in tRNAs that read codons beginning with uridine, leading to the formation of N6-(dimethylallyl)adenosine (i(6)A). This chain is tRNA dimethylallyltransferase, found in Geobacter metallireducens (strain ATCC 53774 / DSM 7210 / GS-15).